We begin with the raw amino-acid sequence, 73 residues long: Antitoxin VapB20 (73 aa).

Antitoxin component of a type II toxin-antitoxin (TA) system. Upon expression in E.coli neutralizes the toxic effect of cognate toxin VapC20. The chain is Antitoxin VapB20 (vapB20) from Mycobacterium tuberculosis (strain ATCC 25618 / H37Rv).